Reading from the N-terminus, the 93-residue chain is Large ribosomal subunit protein uL23 (93 aa).

Belongs to the universal ribosomal protein uL23 family. In terms of assembly, part of the 50S ribosomal subunit. Contacts protein L29, and trigger factor when it is bound to the ribosome.

Its function is as follows. One of the early assembly proteins it binds 23S rRNA. One of the proteins that surrounds the polypeptide exit tunnel on the outside of the ribosome. Forms the main docking site for trigger factor binding to the ribosome. This Nautilia profundicola (strain ATCC BAA-1463 / DSM 18972 / AmH) protein is Large ribosomal subunit protein uL23.